A 168-amino-acid polypeptide reads, in one-letter code: Large ribosomal subunit protein bL17 (168 aa).

The span at 121-146 (AEAEGGEEKAEQKTEKKAAKAKEPKA) shows a compositional bias: basic and acidic residues. The disordered stretch occupies residues 121 to 168 (AEAEGGEEKAEQKTEKKAAKAKEPKAAKAPKKAAAKPKAKAEKKGAEE). Residues 148–158 (KAPKKAAAKPK) are compositionally biased toward basic residues. Residues 159 to 168 (AKAEKKGAEE) show a composition bias toward basic and acidic residues.

Belongs to the bacterial ribosomal protein bL17 family. Part of the 50S ribosomal subunit. Contacts protein L32.

This Anaeromyxobacter sp. (strain Fw109-5) protein is Large ribosomal subunit protein bL17.